The chain runs to 293 residues: Undecaprenyl-diphosphatase (293 aa).

7 helical membrane-spanning segments follow: residues 3–23, 43–63, 85–105, 109–129, 203–223, 238–258, and 269–289; these read IALAIKALILGIVEGLTEFLP, KGKIFEIVIQFGAILAVCWEF, LNVIVATIPAITLALIFGKAI, LFNPIVVASAFIIGGLVILWA, VATEFSFFLAIPVIFGATVYE, IFGIGFVAAFISAFFCVRWLL, and FAWYRIVFGVIVLVTAYTHLI.

The protein belongs to the UppP family.

It is found in the cell inner membrane. It carries out the reaction di-trans,octa-cis-undecaprenyl diphosphate + H2O = di-trans,octa-cis-undecaprenyl phosphate + phosphate + H(+). Its function is as follows. Catalyzes the dephosphorylation of undecaprenyl diphosphate (UPP). Confers resistance to bacitracin. This is Undecaprenyl-diphosphatase from Ralstonia nicotianae (strain ATCC BAA-1114 / GMI1000) (Ralstonia solanacearum).